The following is a 413-amino-acid chain: 2,3-bisphosphoglycerate-independent phosphoglycerate mutase (413 aa).

It belongs to the BPG-independent phosphoglycerate mutase family. A-PGAM subfamily.

The enzyme catalyses (2R)-2-phosphoglycerate = (2R)-3-phosphoglycerate. The protein operates within carbohydrate degradation; glycolysis; pyruvate from D-glyceraldehyde 3-phosphate: step 3/5. Catalyzes the interconversion of 2-phosphoglycerate and 3-phosphoglycerate. This is 2,3-bisphosphoglycerate-independent phosphoglycerate mutase from Metallosphaera sedula (strain ATCC 51363 / DSM 5348 / JCM 9185 / NBRC 15509 / TH2).